We begin with the raw amino-acid sequence, 432 residues long: D-amino acid dehydrogenase (432 aa).

Val3–Trp17 is an FAD binding site.

This sequence belongs to the DadA oxidoreductase family. It depends on FAD as a cofactor.

It carries out the reaction a D-alpha-amino acid + A + H2O = a 2-oxocarboxylate + AH2 + NH4(+). Its pathway is amino-acid degradation; D-alanine degradation; NH(3) and pyruvate from D-alanine: step 1/1. Its function is as follows. Oxidative deamination of D-amino acids. The chain is D-amino acid dehydrogenase from Salmonella paratyphi C (strain RKS4594).